A 382-amino-acid polypeptide reads, in one-letter code: tRNA (guanine(37)-N(1))-methyltransferase (382 aa).

Residues His205, 243 to 244 (DL), 269 to 270 (DA), and Asn291 each bind S-adenosyl-L-methionine.

This sequence belongs to the class I-like SAM-binding methyltransferase superfamily. TRM5/TYW2 family. In terms of assembly, monomer.

The protein localises to the mitochondrion matrix. It localises to the nucleus. The protein resides in the cytoplasm. The catalysed reaction is guanosine(37) in tRNA + S-adenosyl-L-methionine = N(1)-methylguanosine(37) in tRNA + S-adenosyl-L-homocysteine + H(+). Specifically methylates the N1 position of guanosine-37 in various cytoplasmic and mitochondrial tRNAs. Methylation is not dependent on the nature of the nucleoside 5' of the target nucleoside. This is the first step in the biosynthesis of wybutosine (yW), a modified base adjacent to the anticodon of tRNAs and required for accurate decoding. In Entamoeba histolytica (strain ATCC 30459 / HM-1:IMSS / ABRM), this protein is tRNA (guanine(37)-N(1))-methyltransferase.